The primary structure comprises 162 residues: UPF0262 protein AZC_3148 (162 aa).

It belongs to the UPF0262 family.

This chain is UPF0262 protein AZC_3148, found in Azorhizobium caulinodans (strain ATCC 43989 / DSM 5975 / JCM 20966 / LMG 6465 / NBRC 14845 / NCIMB 13405 / ORS 571).